Reading from the N-terminus, the 334-residue chain is tRNA-dihydrouridine(20/20a) synthase (334 aa).

Residues 17 to 19 (PMM) and Gln70 contribute to the FMN site. Cys100 acts as the Proton donor in catalysis. FMN contacts are provided by residues Lys139, His171, 211 to 213 (NGG), and 233 to 234 (GR).

This sequence belongs to the Dus family. DusA subfamily. The cofactor is FMN.

It carries out the reaction 5,6-dihydrouridine(20) in tRNA + NADP(+) = uridine(20) in tRNA + NADPH + H(+). The catalysed reaction is 5,6-dihydrouridine(20) in tRNA + NAD(+) = uridine(20) in tRNA + NADH + H(+). The enzyme catalyses 5,6-dihydrouridine(20a) in tRNA + NADP(+) = uridine(20a) in tRNA + NADPH + H(+). It catalyses the reaction 5,6-dihydrouridine(20a) in tRNA + NAD(+) = uridine(20a) in tRNA + NADH + H(+). Its function is as follows. Catalyzes the synthesis of 5,6-dihydrouridine (D), a modified base found in the D-loop of most tRNAs, via the reduction of the C5-C6 double bond in target uridines. Specifically modifies U20 and U20a in tRNAs. The polypeptide is tRNA-dihydrouridine(20/20a) synthase (dus2) (Synechocystis sp. (strain ATCC 27184 / PCC 6803 / Kazusa)).